The following is a 520-amino-acid chain: MSGKCDVVVVGGGISGMAAAKLLHDFGLNVVVLEARDRVGGRTYTIRNQKVKYLDLGGSYVGPTQNCILRLAKELGLETYKVNEVERLIHHVKGKSYPFRGPFPPVWNPIAYLDHNNLWRTMDDMGREIPSDAPWKAPLAEEWDHMTMKELLDKICWTESAKQLATLFVNLCVTAETHEVSALWFLWYVKQCGGTTRIISTTNGGQERKFVGGSGQVSERIMDLLGDQVKLERPVTHIDQTGENVLVETLNHEVYEAKYVISAIPPTLGMKIHFNPPLPMMRNQLITRVPLGSVIKCIVYYKEPFWRKKDYCGTMIIEGEEAPIAYTLDDTKPDGNYAAIMGFILAHKARKLARLTKDERMKKLCELYAKVLGSQEALQPVHYEEKNWCEEQYSGGCYTTYFPPGIMTQYGRVLRQPVGRIYFAGTETATHWSGYMEGAVEAGERAAREILHAMGKIPEDEIWQSEPESVDVPAQPITTTFLERHLPSVPGLLRLIGLTAIFSATALGVLAHKRGLLVRV.

An N-acetylserine modification is found at S2. Residues 2 to 489 (SGKCDVVVVG…TFLERHLPSV (488 aa)) are Cytoplasmic-facing. K52 carries the N6-acetyllysine modification. At C397 the chain carries S-8alpha-FAD cysteine. A helical; Anchor for type IV membrane protein membrane pass occupies residues 490–516 (PGLLRLIGLTAIFSATALGVLAHKRGL). The Mitochondrial intermembrane portion of the chain corresponds to 517–520 (LVRV).

Belongs to the flavin monoamine oxidase family. As to quaternary structure, monomer, homo- or heterodimer (containing two subunits of similar size). Each subunit contains a covalently bound flavin. Enzymatically active as monomer. FAD serves as cofactor.

The protein resides in the mitochondrion outer membrane. The enzyme catalyses a secondary aliphatic amine + O2 + H2O = a primary amine + an aldehyde + H2O2. The catalysed reaction is (R)-adrenaline + O2 + H2O = (R)-3,4-dihydroxymandelaldehyde + methylamine + H2O2. It catalyses the reaction a primary methyl amine + O2 + H2O = an aldehyde + H2O2 + NH4(+). It carries out the reaction benzylamine + O2 + H2O = benzaldehyde + H2O2 + NH4(+). The enzyme catalyses dopamine + O2 + H2O = 3,4-dihydroxyphenylacetaldehyde + H2O2 + NH4(+). The catalysed reaction is tyramine + O2 + H2O = (4-hydroxyphenyl)acetaldehyde + H2O2 + NH4(+). It catalyses the reaction (R)-noradrenaline + O2 + H2O = (R)-3,4-dihydroxymandelaldehyde + H2O2 + NH4(+). It carries out the reaction 2-phenylethylamine + O2 + H2O = 2-phenylacetaldehyde + H2O2 + NH4(+). The enzyme catalyses N-acetylputrescine + O2 + H2O = 4-acetamidobutanal + H2O2 + NH4(+). Catalyzes the oxidative deamination of primary and some secondary amines such as neurotransmitters, and exogenous amines including the tertiary amine, neurotoxin 1-methyl-4-phenyl-1,2,3,6-tetrahydropyridine (MPTP), with concomitant reduction of oxygen to hydrogen peroxide and participates in the metabolism of neuroactive and vasoactive amines in the central nervous system and peripheral tissues. Preferentially degrades benzylamine and phenylethylamine. This Canis lupus familiaris (Dog) protein is Amine oxidase [flavin-containing] B.